The sequence spans 304 residues: Homoserine O-acetyltransferase (304 aa).

The Acyl-thioester intermediate role is filled by C142. K163 and S192 together coordinate substrate. H235 (proton acceptor) is an active-site residue. The active site involves E237. R249 serves as a coordination point for substrate.

The protein belongs to the MetA family.

It localises to the cytoplasm. The catalysed reaction is L-homoserine + acetyl-CoA = O-acetyl-L-homoserine + CoA. Its pathway is amino-acid biosynthesis; L-methionine biosynthesis via de novo pathway; O-acetyl-L-homoserine from L-homoserine: step 1/1. Transfers an acetyl group from acetyl-CoA to L-homoserine, forming acetyl-L-homoserine. The chain is Homoserine O-acetyltransferase from Clostridium beijerinckii (strain ATCC 51743 / NCIMB 8052) (Clostridium acetobutylicum).